A 720-amino-acid polypeptide reads, in one-letter code: Phosphoribosylformylglycinamidine synthase subunit PurL (720 aa).

Residue His34 is part of the active site. An ATP-binding site is contributed by Tyr37. Glu83 contributes to the Mg(2+) binding site. Residues 84–87 (SHNH) and Arg106 each bind substrate. The Proton acceptor role is filled by His85. Residue Asp107 coordinates Mg(2+). Gln231 is a binding site for substrate. Asp259 provides a ligand contact to Mg(2+). Residue 303–305 (ESQ) participates in substrate binding. 2 residues coordinate ATP: Asp480 and Gly517. Asn518 provides a ligand contact to Mg(2+). Ser520 lines the substrate pocket.

The protein belongs to the FGAMS family. In terms of assembly, monomer. Part of the FGAM synthase complex composed of 1 PurL, 1 PurQ and 2 PurS subunits.

The protein resides in the cytoplasm. The catalysed reaction is N(2)-formyl-N(1)-(5-phospho-beta-D-ribosyl)glycinamide + L-glutamine + ATP + H2O = 2-formamido-N(1)-(5-O-phospho-beta-D-ribosyl)acetamidine + L-glutamate + ADP + phosphate + H(+). The protein operates within purine metabolism; IMP biosynthesis via de novo pathway; 5-amino-1-(5-phospho-D-ribosyl)imidazole from N(2)-formyl-N(1)-(5-phospho-D-ribosyl)glycinamide: step 1/2. In terms of biological role, part of the phosphoribosylformylglycinamidine synthase complex involved in the purines biosynthetic pathway. Catalyzes the ATP-dependent conversion of formylglycinamide ribonucleotide (FGAR) and glutamine to yield formylglycinamidine ribonucleotide (FGAM) and glutamate. The FGAM synthase complex is composed of three subunits. PurQ produces an ammonia molecule by converting glutamine to glutamate. PurL transfers the ammonia molecule to FGAR to form FGAM in an ATP-dependent manner. PurS interacts with PurQ and PurL and is thought to assist in the transfer of the ammonia molecule from PurQ to PurL. The polypeptide is Phosphoribosylformylglycinamidine synthase subunit PurL (Haloarcula marismortui (strain ATCC 43049 / DSM 3752 / JCM 8966 / VKM B-1809) (Halobacterium marismortui)).